The chain runs to 417 residues: Serine hydroxymethyltransferase (417 aa).

Residues L121 and 125–127 contribute to the (6S)-5,6,7,8-tetrahydrofolate site; that span reads GHL. K229 carries the N6-(pyridoxal phosphate)lysine modification. 355 to 357 lines the (6S)-5,6,7,8-tetrahydrofolate pocket; that stretch reads SPF.

It belongs to the SHMT family. In terms of assembly, homodimer. Pyridoxal 5'-phosphate serves as cofactor.

The protein resides in the cytoplasm. It catalyses the reaction (6R)-5,10-methylene-5,6,7,8-tetrahydrofolate + glycine + H2O = (6S)-5,6,7,8-tetrahydrofolate + L-serine. It functions in the pathway one-carbon metabolism; tetrahydrofolate interconversion. It participates in amino-acid biosynthesis; glycine biosynthesis; glycine from L-serine: step 1/1. Catalyzes the reversible interconversion of serine and glycine with tetrahydrofolate (THF) serving as the one-carbon carrier. This reaction serves as the major source of one-carbon groups required for the biosynthesis of purines, thymidylate, methionine, and other important biomolecules. Also exhibits THF-independent aldolase activity toward beta-hydroxyamino acids, producing glycine and aldehydes, via a retro-aldol mechanism. The chain is Serine hydroxymethyltransferase from Shewanella sp. (strain MR-4).